Here is a 315-residue protein sequence, read N- to C-terminus: NAD kinase (315 aa).

D91 functions as the Proton acceptor in the catalytic mechanism. Residues 91 to 92, R96, 165 to 166, D195, and 206 to 211 contribute to the NAD(+) site; these read DG, NE, and TAYAFS.

The protein belongs to the NAD kinase family. A divalent metal cation serves as cofactor.

It is found in the cytoplasm. The catalysed reaction is NAD(+) + ATP = ADP + NADP(+) + H(+). Functionally, involved in the regulation of the intracellular balance of NAD and NADP, and is a key enzyme in the biosynthesis of NADP. Catalyzes specifically the phosphorylation on 2'-hydroxyl of the adenosine moiety of NAD to yield NADP. The sequence is that of NAD kinase from Rhodococcus erythropolis (strain PR4 / NBRC 100887).